Consider the following 157-residue polypeptide: Probable succinate transporter subunit YjjB (157 aa).

The next 4 helical transmembrane spans lie at 6–26, 51–71, 87–107, and 129–149; these read IILTLIEDMILAAIPAVGFAM, VLMISGMNIEWASFCAAILVG, VFTVAAIIPMFPGINAYVAMI, and FLKASFIVGALSIGLSLPGLW.

The protein belongs to the ThrE exporter (TC 2.A.79) family. The transporter is composed of YjjB and YjjP.

The protein resides in the cell inner membrane. In terms of biological role, involved in succinate export with YjjP. Both proteins are required for export. This chain is Probable succinate transporter subunit YjjB, found in Proteus mirabilis (strain HI4320).